We begin with the raw amino-acid sequence, 410 residues long: Arginine deiminase (410 aa).

Catalysis depends on C399, which acts as the Amidino-cysteine intermediate.

The protein belongs to the arginine deiminase family.

It is found in the cytoplasm. The catalysed reaction is L-arginine + H2O = L-citrulline + NH4(+). The protein operates within amino-acid degradation; L-arginine degradation via ADI pathway; carbamoyl phosphate from L-arginine: step 1/2. The sequence is that of Arginine deiminase from Treponema denticola (strain ATCC 35405 / DSM 14222 / CIP 103919 / JCM 8153 / KCTC 15104).